Consider the following 278-residue polypeptide: Large ribosomal subunit protein uL2 (278 aa).

2 disordered regions span residues 27-58 (STPE…GGGH) and 224-278 (VVMN…GKKR). The segment covering 37–58 (LHGKGGRNAHGRITTRHKGGGH) has biased composition (basic residues). Residues 253-268 (PEGRTRKPNKPSDKLI) are compositionally biased toward basic and acidic residues. Over residues 269-278 (VRRRRTGKKR) the composition is skewed to basic residues.

Belongs to the universal ribosomal protein uL2 family. In terms of assembly, part of the 50S ribosomal subunit. Forms a bridge to the 30S subunit in the 70S ribosome.

One of the primary rRNA binding proteins. Required for association of the 30S and 50S subunits to form the 70S ribosome, for tRNA binding and peptide bond formation. It has been suggested to have peptidyltransferase activity; this is somewhat controversial. Makes several contacts with the 16S rRNA in the 70S ribosome. This is Large ribosomal subunit protein uL2 from Mycobacterium sp. (strain KMS).